The primary structure comprises 270 residues: Putative hydro-lyase ACIAD2519 (270 aa).

This sequence belongs to the D-glutamate cyclase family.

This Acinetobacter baylyi (strain ATCC 33305 / BD413 / ADP1) protein is Putative hydro-lyase ACIAD2519.